The sequence spans 251 residues: Flap endonuclease Xni (251 aa).

Residues 51 to 72 (EDDRSDSWRHQSLPDYKAGRSP) form a disordered region. A Mg(2+)-binding site is contributed by Asp104. Positions 160-249 (VLPHQLPDYW…LSGNLQQLRL (90 aa)) constitute a 5'-3' exonuclease domain. K(+)-binding residues include Leu171, Ala172, Pro180, Val182, and Ile185. The tract at residues 184–189 (GIGAKT) is interaction with DNA.

The protein belongs to the Xni family. Mg(2+) is required as a cofactor. K(+) serves as cofactor.

Its function is as follows. Has flap endonuclease activity. During DNA replication, flap endonucleases cleave the 5'-overhanging flap structure that is generated by displacement synthesis when DNA polymerase encounters the 5'-end of a downstream Okazaki fragment. This Yersinia enterocolitica serotype O:8 / biotype 1B (strain NCTC 13174 / 8081) protein is Flap endonuclease Xni.